Here is a 513-residue protein sequence, read N- to C-terminus: ATP synthase subunit alpha (513 aa).

169–176 (GDRQIGKT) contributes to the ATP binding site.

The protein belongs to the ATPase alpha/beta chains family. As to quaternary structure, F-type ATPases have 2 components, CF(1) - the catalytic core - and CF(0) - the membrane proton channel. CF(1) has five subunits: alpha(3), beta(3), gamma(1), delta(1), epsilon(1). CF(0) has three main subunits: a(1), b(2) and c(9-12). The alpha and beta chains form an alternating ring which encloses part of the gamma chain. CF(1) is attached to CF(0) by a central stalk formed by the gamma and epsilon chains, while a peripheral stalk is formed by the delta and b chains.

Its subcellular location is the cell inner membrane. The catalysed reaction is ATP + H2O + 4 H(+)(in) = ADP + phosphate + 5 H(+)(out). In terms of biological role, produces ATP from ADP in the presence of a proton gradient across the membrane. The alpha chain is a regulatory subunit. The sequence is that of ATP synthase subunit alpha from Vibrio alginolyticus.